The chain runs to 290 residues: MERGPVVGAGLGARARIRTLLGCLVKVLLWVASALLYFGSEQAARLLGSPCLRRLYHAWLAAVVIFGPLLQFHVNPRTIFASHGNFFNIKFVNSAWGWTCTFLGGFVLLVVFLATRRVAVTARHLSRLVVGAAVWRGAGRAFLLIEDLTGSCFEPLPQGLLLHELPDRRSRLAAGHQWRGYTVSSHTFLLTFCCLLMAEEAAVFAKYLAHGLPAGAPLRLVFLLNVLLLGLWNFLLLCTVIYFHQYTHKVVGAAVGTFAWYLTYGSWYHQPWSPGSPGHGLFTHPSRKHN.

Residues 1 to 18 (MERGPVVGAGLGARARIR) are Lumenal-facing. A helical membrane pass occupies residues 19 to 39 (TLLGCLVKVLLWVASALLYFG). Residues 40–54 (SEQAARLLGSPCLRR) lie on the Cytoplasmic side of the membrane. Residues 55–75 (LYHAWLAAVVIFGPLLQFHVN) traverse the membrane as a helical segment. At 76–94 (PRTIFASHGNFFNIKFVNS) the chain is on the lumenal side. Residues 95–115 (AWGWTCTFLGGFVLLVVFLAT) traverse the membrane as a helical segment. At 116-141 (RRVAVTARHLSRLVVGAAVWRGAGRA) the chain is on the cytoplasmic side. The chain crosses the membrane as a helical span at residues 142-162 (FLLIEDLTGSCFEPLPQGLLL). Residues 163–187 (HELPDRRSRLAAGHQWRGYTVSSHT) are Lumenal-facing. His186 is an active-site residue. The helical transmembrane segment at 188–208 (FLLTFCCLLMAEEAAVFAKYL) threads the bilayer. Residues 209-220 (AHGLPAGAPLRL) lie on the Cytoplasmic side of the membrane. Residues 221–241 (VFLLNVLLLGLWNFLLLCTVI) form a helical membrane-spanning segment. Residues 242–249 (YFHQYTHK) are Lumenal-facing. His244 is an active-site residue. The chain crosses the membrane as a helical span at residues 250–270 (VVGAAVGTFAWYLTYGSWYHQ). At 271–290 (PWSPGSPGHGLFTHPSRKHN) the chain is on the cytoplasmic side.

The protein belongs to the FIT family. FIT1 subfamily.

The protein resides in the endoplasmic reticulum membrane. In terms of biological role, plays an important role in the formation of lipid droplets (LDs) which are storage organelles at the center of lipid and energy homeostasis. Directly binds to diacylglycerol (DAGs) and triacylglycerol. This is Fat storage-inducing transmembrane protein 1 from Sus scrofa (Pig).